The chain runs to 599 residues: MSGFHNVGNINMMAQQQMQQNRIKISVRNWQNATMNDLINFISRNARVAVYDAHVEGPLVIGYVNSKAEAESLMKWNGVRFAGSNLKFELLDNNGASAGTSDTISFLRGVLLKRYDPQTKLLNLGALHSDPELIQKGVFSSISTQSKMFPAMMKLASTEKSLIVESVNLADNQLKDISAISTLAQTFPNLKNLCLANNQIFRFRSLEVWKNKFKDLRELLMTNNPITTDKLYRTEMLRLFPKLVVLDNVIVRDEQKLQTVYSLPMKIQQFFFENDALGQSSTDFATNFLNLWDNNREQLLNLYSPQSQFSVSVDSTIPPSTVTDSDQTPAFGYYMSSSRNISKVSSEKSIQQRLSIGQESINSIFKTLPKTKHHLQEQPNEYSMETISYPQINGFVITLHGFFEETGKPELESNKKTGKNNYQKNRRYNHGYNSTSNNKLSKKSFDRTWVIVPMNNSVIIASDLLTVRAYSTGAWKTASIAIAQPPQQQASVLPQVASMNPNITTPPQPQPSVVPGGMSIPGAPQGAMVMAPTLQLPPDVQSRLNPVQLELLNKLHLETKLNAEYTFMLAEQSNWNYEVAIKGFQSSMNGIPREAFVQF.

An N-acetylserine modification is found at Ser2. LRR repeat units follow at residues 163 to 184 and 189 to 210; these read IVESVNLADNQLKDISAISTLA and NLKNLCLANNQIFRFRSLEVWK. The LRRCT domain maps to 224–262; that stretch reads NPITTDKLYRTEMLRLFPKLVVLDNVIVRDEQKLQTVYS. An NTF2 domain is found at 280–467; that stretch reads SSTDFATNFL…VIIASDLLTV (188 aa). The tract at residues 408 to 439 is disordered; it reads KPELESNKKTGKNNYQKNRRYNHGYNSTSNNK. One can recognise a TAP-C domain in the interval 546 to 599; the sequence is PVQLELLNKLHLETKLNAEYTFMLAEQSNWNYEVAIKGFQSSMNGIPREAFVQF.

It belongs to the NXF family. Interacts with nucleoporin complex NUP84 and MTR2. Interacts with MIP6.

The protein resides in the nucleus. Its subcellular location is the cytoplasm. In terms of biological role, involved in the export of mRNA from the nucleus to the cytoplasm. The protein is mRNA export factor MEX67 (MEX67) of Saccharomyces cerevisiae (strain ATCC 204508 / S288c) (Baker's yeast).